The chain runs to 580 residues: Glypican-3 (580 aa).

The N-terminal stretch at 1–24 (MAGTVRTACLVVAMLLSLDFPGQA) is a signal peptide. The residue at position 25 (Gln25) is a Pyrrolidone carboxylic acid. Intrachain disulfides connect Cys35–Cys72, Cys65–Cys262, Cys73–Cys265, Cys197–Cys349, Cys252–Cys285, Cys274–Cys422, and Cys278–Cys410. N-linked (GlcNAc...) asparagine glycans are attached at residues Asn124 and Asn241. Ser352 carries the phosphoserine; by FAM20C modification. An N-linked (GlcNAc...) asparagine glycan is attached at Asn418. Residues Ser495 and Ser509 are each glycosylated (O-linked (Xyl...) (glycosaminoglycan) serine). Asn554 carries the GPI-anchor amidated asparagine lipid modification. A propeptide spans 555–580 (LGNVHSPLKLLTSMAISVVCFFFLVH) (removed in mature form).

This sequence belongs to the glypican family. Heterodimer; disulfide-linked. Cleavage by a furin-like convertase results in production of alpha and beta chains which form a disulfide-linked heterodimer. Interacts with DPP4. Interacts with FGF2. Interacts with WNT5A. Also interacts with WNT3A and WNT7B. Interacts with hedgehog protein SHH; the heparan sulfate chains are not required for the interaction. Also interacts with hedgehog protein IHH. Interacts with CD81. Interacts with Wnt receptors FZD4, FZD7 and FZD8; the heparan sulfate chains are required for the interaction. O-glycosylated; contains heparan sulfate and/or chondroitin sulfate. Post-translationally, cleaved intracellularly by a furin-like convertase to generate 2 subunits, alpha and beta, which remain associated through disulfide bonds and are associated with the cell surface via the GPI-anchor. This processing is essential for its role in inhibition of hedgehog signaling. A second proteolytic event may result in cleavage of the protein on the cell surface, separating it from the GPI-anchor and leading to its shedding from the cell surface. In terms of tissue distribution, detected in placenta (at protein level). Highly expressed in lung, liver and kidney.

It is found in the cell membrane. In terms of biological role, cell surface proteoglycan. Negatively regulates the hedgehog signaling pathway when attached via the GPI-anchor to the cell surface by competing with the hedgehog receptor PTC1 for binding to hedgehog proteins. Binding to the hedgehog protein SHH triggers internalization of the complex by endocytosis and its subsequent lysosomal degradation. Positively regulates the canonical Wnt signaling pathway by binding to the Wnt receptor Frizzled and stimulating the binding of the Frizzled receptor to Wnt ligands. Positively regulates the non-canonical Wnt signaling pathway. Binds to CD81 which decreases the availability of free CD81 for binding to the transcriptional repressor HHEX, resulting in nuclear translocation of HHEX and transcriptional repression. Inhibits the dipeptidyl peptidase activity of DPP4. Plays a role in limb patterning and skeletal development by controlling the cellular response to BMP4. Modulates the effects of growth factors BMP2, BMP7 and FGF7 on renal branching morphogenesis. Required for coronary vascular development. Plays a role in regulating cell movements during gastrulation. This is Glypican-3 (GPC3) from Homo sapiens (Human).